Reading from the N-terminus, the 320-residue chain is Beta-ketoacyl-[acyl-carrier-protein] synthase III (320 aa).

Active-site residues include cysteine 114 and histidine 247. The interval 248–252 is ACP-binding; the sequence is QANRR. Asparagine 277 is a catalytic residue.

It belongs to the thiolase-like superfamily. FabH family. In terms of assembly, homodimer.

It is found in the cytoplasm. It catalyses the reaction malonyl-[ACP] + acetyl-CoA + H(+) = 3-oxobutanoyl-[ACP] + CO2 + CoA. It functions in the pathway lipid metabolism; fatty acid biosynthesis. In terms of biological role, catalyzes the condensation reaction of fatty acid synthesis by the addition to an acyl acceptor of two carbons from malonyl-ACP. Catalyzes the first condensation reaction which initiates fatty acid synthesis and may therefore play a role in governing the total rate of fatty acid production. Possesses both acetoacetyl-ACP synthase and acetyl transacylase activities. Its substrate specificity determines the biosynthesis of branched-chain and/or straight-chain of fatty acids. The protein is Beta-ketoacyl-[acyl-carrier-protein] synthase III of Neisseria meningitidis serogroup B (strain ATCC BAA-335 / MC58).